We begin with the raw amino-acid sequence, 297 residues long: Probable deoxyhypusine synthase (297 aa).

Lys265 acts as the Nucleophile in catalysis.

The protein belongs to the deoxyhypusine synthase family. The cofactor is NAD(+).

It catalyses the reaction [eIF5A protein]-L-lysine + spermidine = [eIF5A protein]-deoxyhypusine + propane-1,3-diamine. It functions in the pathway protein modification; eIF5A hypusination. Its function is as follows. Catalyzes the NAD-dependent oxidative cleavage of spermidine and the subsequent transfer of the butylamine moiety of spermidine to the epsilon-amino group of a specific lysine residue of the eIF-5A precursor protein to form the intermediate deoxyhypusine residue. This is Probable deoxyhypusine synthase from Methanopyrus kandleri (strain AV19 / DSM 6324 / JCM 9639 / NBRC 100938).